The following is a 354-amino-acid chain: UDP-N-acetylglucosamine--N-acetylmuramyl-(pentapeptide) pyrophosphoryl-undecaprenol N-acetylglucosamine transferase (354 aa).

UDP-N-acetyl-alpha-D-glucosamine-binding positions include 11 to 13 (TAG), Arg164, Ser194, and Gln289.

The protein belongs to the glycosyltransferase 28 family. MurG subfamily.

The protein resides in the cell membrane. It carries out the reaction di-trans,octa-cis-undecaprenyl diphospho-N-acetyl-alpha-D-muramoyl-L-alanyl-D-glutamyl-meso-2,6-diaminopimeloyl-D-alanyl-D-alanine + UDP-N-acetyl-alpha-D-glucosamine = di-trans,octa-cis-undecaprenyl diphospho-[N-acetyl-alpha-D-glucosaminyl-(1-&gt;4)]-N-acetyl-alpha-D-muramoyl-L-alanyl-D-glutamyl-meso-2,6-diaminopimeloyl-D-alanyl-D-alanine + UDP + H(+). It functions in the pathway cell wall biogenesis; peptidoglycan biosynthesis. Cell wall formation. Catalyzes the transfer of a GlcNAc subunit on undecaprenyl-pyrophosphoryl-MurNAc-pentapeptide (lipid intermediate I) to form undecaprenyl-pyrophosphoryl-MurNAc-(pentapeptide)GlcNAc (lipid intermediate II). This is UDP-N-acetylglucosamine--N-acetylmuramyl-(pentapeptide) pyrophosphoryl-undecaprenol N-acetylglucosamine transferase from Lachnospira eligens (strain ATCC 27750 / DSM 3376 / VPI C15-48 / C15-B4) (Eubacterium eligens).